The following is a 110-amino-acid chain: UPF0145 protein MTH_507 (110 aa).

Belongs to the UPF0145 family.

In Methanothermobacter thermautotrophicus (strain ATCC 29096 / DSM 1053 / JCM 10044 / NBRC 100330 / Delta H) (Methanobacterium thermoautotrophicum), this protein is UPF0145 protein MTH_507.